The sequence spans 352 residues: Phosphoribosylformylglycinamidine cyclo-ligase (352 aa).

This sequence belongs to the AIR synthase family.

The protein localises to the cytoplasm. It catalyses the reaction 2-formamido-N(1)-(5-O-phospho-beta-D-ribosyl)acetamidine + ATP = 5-amino-1-(5-phospho-beta-D-ribosyl)imidazole + ADP + phosphate + H(+). The protein operates within purine metabolism; IMP biosynthesis via de novo pathway; 5-amino-1-(5-phospho-D-ribosyl)imidazole from N(2)-formyl-N(1)-(5-phospho-D-ribosyl)glycinamide: step 2/2. The sequence is that of Phosphoribosylformylglycinamidine cyclo-ligase from Ectopseudomonas mendocina (strain ymp) (Pseudomonas mendocina).